Reading from the N-terminus, the 200-residue chain is Holliday junction branch migration complex subunit RuvA (200 aa).

Positions 1-64 are domain I; the sequence is MYAYFRGRVV…EDALQLYGFS (64 aa). A domain II region spans residues 65–143; sequence SEEEKQLFRL…KLSPPGAAAT (79 aa). Residues 144-154 form a flexible linker region; sequence PAGAVQCGIRE. The domain III stretch occupies residues 154 to 200; it reads EDATNALLTLGFSRTAAQQAVAGVLEANPGGSVEDVVKSALLAMHNR.

Belongs to the RuvA family. In terms of assembly, homotetramer. Forms an RuvA(8)-RuvB(12)-Holliday junction (HJ) complex. HJ DNA is sandwiched between 2 RuvA tetramers; dsDNA enters through RuvA and exits via RuvB. An RuvB hexamer assembles on each DNA strand where it exits the tetramer. Each RuvB hexamer is contacted by two RuvA subunits (via domain III) on 2 adjacent RuvB subunits; this complex drives branch migration. In the full resolvosome a probable DNA-RuvA(4)-RuvB(12)-RuvC(2) complex forms which resolves the HJ.

The protein resides in the cytoplasm. Functionally, the RuvA-RuvB-RuvC complex processes Holliday junction (HJ) DNA during genetic recombination and DNA repair, while the RuvA-RuvB complex plays an important role in the rescue of blocked DNA replication forks via replication fork reversal (RFR). RuvA specifically binds to HJ cruciform DNA, conferring on it an open structure. The RuvB hexamer acts as an ATP-dependent pump, pulling dsDNA into and through the RuvAB complex. HJ branch migration allows RuvC to scan DNA until it finds its consensus sequence, where it cleaves and resolves the cruciform DNA. The chain is Holliday junction branch migration complex subunit RuvA from Chlorobium luteolum (strain DSM 273 / BCRC 81028 / 2530) (Pelodictyon luteolum).